Reading from the N-terminus, the 324-residue chain is E3 ubiquitin-protein ligase SIAH2 (324 aa).

A compositionally biased stretch (polar residues) spans 1–15; that stretch reads MSRPSSTGPSANKPC. Residues 1–42 form a disordered region; that stretch reads MSRPSSTGPSANKPCSKQPPPQPQHTPSPAAPPAAATISAAG. Residue serine 6 is modified to Phosphoserine. A Phosphoserine; by DYRK2 modification is found at serine 16. The span at 17-32 shows a compositional bias: pro residues; the sequence is KQPPPQPQHTPSPAAP. Threonine 26 carries the post-translational modification Phosphothreonine; by DYRK2. Position 28 is a phosphoserine; by DYRK2 and MAPK14 (serine 28). Residues 33–42 show a composition bias toward low complexity; the sequence is PAAATISAAG. Serine 68 is modified (phosphoserine; by DYRK2). The segment at 80–115 adopts an RING-type zinc-finger fold; that stretch reads CPVCFDYVLPPILQCQAGHLVCNQCRQKLSCCPTCR. Threonine 119 is subject to Phosphothreonine; by DYRK2. An SBD region spans residues 130-322; that stretch reads VASAVLFPCK…LGINVTISTC (193 aa). Residues 133–193 form an SIAH-type zinc finger; the sequence is AVLFPCKYAT…VMSHLMHAHK (61 aa). The Zn(2+) site is built by cysteine 138, cysteine 145, histidine 157, cysteine 161, cysteine 168, cysteine 175, histidine 187, and histidine 192.

It belongs to the SINA (Seven in absentia) family. As to quaternary structure, homodimer. Interacts with UBE2E2. Interacts with PEG3. Interacts with VAV1, without mediating its ubiquitin-mediated degradation. Interacts with CACYBP/SIP. Probable component of some large E3 complex possibly composed of UBE2D1, SIAH2, CACYBP/SIP, SKP1, APC and TBL1X. Interacts with PEG10, which may inhibit its activity. Interacts with EGLN2 and SNCAIP. Interacts with DYRK2. Interacts with NR1D1 and NR1D2. Interacts with DCC. Interacts with AXIN1. In terms of processing, phosphorylated at Ser-28 by MAPK14, which mediates the degradation by the proteasome of EGLN3. Phosphorylated at Ser-28 by DYRK2; this increases the ubiquitin ligase activity and promotes degradation of EGLN3. As to expression, widely expressed at low level.

Its subcellular location is the cytoplasm. It localises to the nucleus. The enzyme catalyses S-ubiquitinyl-[E2 ubiquitin-conjugating enzyme]-L-cysteine + [acceptor protein]-L-lysine = [E2 ubiquitin-conjugating enzyme]-L-cysteine + N(6)-ubiquitinyl-[acceptor protein]-L-lysine.. Its pathway is protein modification; protein ubiquitination. Inhibited by interaction with SNCAIP (isoform 2, but not isoform 1). May be inhibited by interaction with PEG10. In terms of biological role, E3 ubiquitin-protein ligase that mediates ubiquitination and subsequent proteasomal degradation of target proteins. E3 ubiquitin ligases accept ubiquitin from an E2 ubiquitin-conjugating enzyme in the form of a thioester and then directly transfers the ubiquitin to targeted substrates. Mediates E3 ubiquitin ligase activity either through direct binding to substrates or by functioning as the essential RING domain subunit of larger E3 complexes. Triggers the ubiquitin-mediated degradation of many substrates, including proteins involved in transcription regulation (GPS2, POU2AF1, PML, NCOR1), a cell surface receptor (DCC), an antiapoptotic protein (BAG1), and a protein involved in synaptic vesicle function in neurons (SYP). Mediates ubiquitination and proteasomal degradation of DYRK2 in response to hypoxia. It is thereby involved in apoptosis, tumor suppression, cell cycle, transcription and signaling processes. Has some overlapping function with SIAH1. Triggers the ubiquitin-mediated degradation of TRAF2, whereas SIAH1 does not. Promotes monoubiquitination of SNCA. Regulates cellular clock function via ubiquitination of the circadian transcriptional repressors NR1D1 and NR1D2 leading to their proteasomal degradation. Plays an important role in mediating the rhythmic degradation/clearance of NR1D1 and NR1D2 contributing to their circadian profile of protein abundance. Mediates ubiquitination and degradation of EGLN2 and EGLN3 in response to the unfolded protein response (UPR), leading to their degradation and subsequent stabilization of ATF4. Also part of the Wnt signaling pathway in which it mediates the Wnt-induced ubiquitin-mediated proteasomal degradation of AXIN1. This chain is E3 ubiquitin-protein ligase SIAH2 (SIAH2), found in Homo sapiens (Human).